A 77-amino-acid chain; its full sequence is U8-lycotoxin-Ls1t (77 aa).

The first 20 residues, 1–20 (MKLIIFTGLVLFAIVSLIEA), serve as a signal peptide directing secretion. Positions 21–26 (QAENEK) are excised as a propeptide.

Belongs to the neurotoxin 19 (CSTX) family. 08 (U8-Lctx) subfamily. Contains 4 disulfide bonds. Expressed by the venom gland.

The protein localises to the secreted. The sequence is that of U8-lycotoxin-Ls1t from Lycosa singoriensis (Wolf spider).